Consider the following 856-residue polypeptide: Phosphatidylglycerol lysyltransferase (856 aa).

The next 13 helical transmembrane spans lie at 7-27, 51-71, 88-108, 128-148, 161-181, 208-228, 235-255, 280-300, 342-362, 375-395, 420-440, 459-479, and 501-521; these read ALSI…IYQS, LFML…YDYV, VSWI…AGVG, IAWL…FVAA, PWLW…LAVS, SVVE…AMGI, VFGV…PGGF, IVLY…FFAA, SLSL…SLPI, ALLL…ILPI, FLKG…VLLV, IFAV…AGFI, and HATI…TVVY.

This sequence belongs to the LPG synthase family.

It is found in the cell membrane. It catalyses the reaction L-lysyl-tRNA(Lys) + a 1,2-diacyl-sn-glycero-3-phospho-(1'-sn-glycerol) = a 1,2-diacyl-sn-glycero-3-phospho-1'-(3'-O-L-lysyl)-sn-glycerol + tRNA(Lys). Functionally, catalyzes the transfer of a lysyl group from L-lysyl-tRNA(Lys) to membrane-bound phosphatidylglycerol (PG), which produces lysylphosphatidylglycerol (LPG), one of the components of the bacterial membrane with a positive net charge. LPG synthesis contributes to the resistance to cationic antimicrobial peptides (CAMPs) and likely protects B.subtilis against its own CAMPs and against those produced by competiting microorganisms (bacteriocins). In fact, the modification of anionic phosphatidylglycerol with positively charged L-lysine results in repulsion of the peptides. This chain is Phosphatidylglycerol lysyltransferase (mprF), found in Bacillus subtilis (strain 168).